We begin with the raw amino-acid sequence, 459 residues long: tRNA(Ile2) 2-agmatinylcytidine synthetase TiaS (459 aa).

Positions 282 to 360 (VRVRVWVASI…TINLEKLHII (79 aa)) form a DNA-binding region, OB.

Belongs to the TiaS family.

Its subcellular location is the cytoplasm. The catalysed reaction is cytidine(34) in tRNA(Ile2) + agmatine + ATP + H2O = 2-agmatinylcytidine(34) in tRNA(Ile2) + AMP + 2 phosphate + 2 H(+). ATP-dependent agmatine transferase that catalyzes the formation of 2-agmatinylcytidine (agm2C) at the wobble position (C34) of tRNA(Ile2), converting the codon specificity from AUG to AUA. This chain is tRNA(Ile2) 2-agmatinylcytidine synthetase TiaS, found in Staphylothermus marinus (strain ATCC 43588 / DSM 3639 / JCM 9404 / F1).